The following is a 470-amino-acid chain: Asparagine--tRNA ligase (470 aa).

The protein belongs to the class-II aminoacyl-tRNA synthetase family. Homodimer.

It is found in the cytoplasm. The catalysed reaction is tRNA(Asn) + L-asparagine + ATP = L-asparaginyl-tRNA(Asn) + AMP + diphosphate + H(+). This chain is Asparagine--tRNA ligase, found in Blochmanniella floridana.